The chain runs to 781 residues: 5-methyltetrahydropteroyltriglutamate--homocysteine methyltransferase (781 aa).

5-methyltetrahydropteroyltri-L-glutamate contacts are provided by residues 20–23 and K131; that span reads RELK. L-homocysteine is bound by residues 453–455 and E506; that span reads IGS. L-methionine-binding positions include 453-455 and E506; that span reads IGS. 5-methyltetrahydropteroyltri-L-glutamate is bound by residues 537-538 and W583; that span reads RC. Position 621 (D621) interacts with L-homocysteine. Position 621 (D621) interacts with L-methionine. Residue E627 participates in 5-methyltetrahydropteroyltri-L-glutamate binding. The Zn(2+) site is built by H663, C665, and E687. The active-site Proton donor is the H716. C748 contacts Zn(2+).

Belongs to the vitamin-B12 independent methionine synthase family. The cofactor is Zn(2+).

The catalysed reaction is 5-methyltetrahydropteroyltri-L-glutamate + L-homocysteine = tetrahydropteroyltri-L-glutamate + L-methionine. It functions in the pathway amino-acid biosynthesis; L-methionine biosynthesis via de novo pathway; L-methionine from L-homocysteine (MetE route): step 1/1. Catalyzes the transfer of a methyl group from 5-methyltetrahydrofolate to homocysteine resulting in methionine formation. This Bradyrhizobium diazoefficiens (strain JCM 10833 / BCRC 13528 / IAM 13628 / NBRC 14792 / USDA 110) protein is 5-methyltetrahydropteroyltriglutamate--homocysteine methyltransferase.